A 234-amino-acid chain; its full sequence is MSCINLPTVLPGSPSKTRGQIQVILGPMFSGKSTELMRRVRRFQIAQYKCLVIKYAKDTRYSSSFCTHDRNTMEALPACLLRDVAQEALGVAVIGIDEGQFFPDIVEFCEAMANAGKTVIVAALDGTFQRKPFGAILNLVPLAESVVKLTAVCMECFREAAYTKRLGTEKEVEVIGGADKYHSVCRLCYFKKASGQPAGPDNKENCPVPGKPGEAVAARKLFAPQQILQCSPAN.

Serine 2 carries the N-acetylserine modification. A phosphoserine mark is found at serine 2 and serine 13. ATP-binding positions include 26–33 (GPMFSGKS), 58–60 (DTR), and 97–100 (DEGQ). Glutamate 98 acts as the Proton acceptor in catalysis. Phenylalanine 128 serves as a coordination point for substrate. Positions 153 and 156 each coordinate Zn(2+). Substrate is bound by residues 172-176 (VEVIG) and tyrosine 181. Positions 185 and 188 each coordinate Zn(2+). A KEN box motif is present at residues 203-205 (KEN). The residue at position 231 (serine 231) is a Phosphoserine.

Belongs to the thymidine kinase family. In terms of assembly, homotetramer. Tetramerization from dimerization is induced by ATP and increases catalytic efficiency due to a high affinity for thymidine. Tetramerization is inhibited by phosphorylation at Ser-13. Interacts (via the KEN box) with FZR1. Post-translationally, phosphorylated on Ser-13 in mitosis. Phosphorylation of Ser-13 by CDK1 during mitosis reduces homotetramerization and catalytic efficiency when DNA replication is complete and intracellular TK1 is still present at a high level. Polyubiquitinated. Postmitosis, ubiquitination leads to proteasomal degradation. The KEN box sequence located at the C-terminal region targets for degradation by the anaphase promoting complex (APC/C) activated and rate-limited by FZR1.

The protein resides in the cytoplasm. It carries out the reaction thymidine + ATP = dTMP + ADP + H(+). In terms of biological role, cell-cycle-regulated enzyme of importance in nucleotide metabolism. Catalyzes the first enzymatic step in the salvage pathway converting thymidine into thymidine monophosphate. Transcriptional regulation limits expression to the S phase of the cell cycle and transient expression coincides with the oscillation in the intracellular dTTP concentration. Also important for the activation of anticancer and antiviral nucleoside analog prodrugs such as 1-b-d-arabinofuranosylcytosine (AraC) and 3c-azido-3c-deoxythymidine (AZT). The chain is Thymidine kinase, cytosolic from Homo sapiens (Human).